The chain runs to 375 residues: Prophage integrase IntE (375 aa).

The Core-binding (CB) domain maps to 82-167 (ITTSTWLDRY…VLIDVFKEAQ (86 aa)). Residues 189–375 (ITRQRLSLEE…RGKGWSKVAL (187 aa)) form the Tyr recombinase domain. Catalysis depends on residues arginine 226, lysine 249, histidine 330, arginine 333, and histidine 353. Positions 350 to 375 (LLGHKTQQQTDRYHDDRGKGWSKVAL) are disordered. Tyrosine 362 serves as the catalytic O-(3'-phospho-DNA)-tyrosine intermediate.

This sequence belongs to the 'phage' integrase family.

Functionally, integrase from the cryptic lambdoid prophage e14. Integrase is necessary for integration of the phage into the host genome by site-specific recombination. In conjunction with excisionase, integrase is also necessary for excision of the prophage from the host genome. This is Prophage integrase IntE (intE) from Escherichia coli (strain K12).